The following is a 447-amino-acid chain: BAG family molecular chaperone regulator 5 (447 aa).

BAG domains are found at residues 9 to 86 (SISR…EQNA), 95 to 167 (QNIF…EDCM), 182 to 260 (SVAK…DLEE), 275 to 350 (SIIK…DLKE), and 365 to 442 (PHKA…DMKS).

In terms of assembly, binds to the ATPase domain of HSP/HSP70 chaperones. Binds PRKN. Interacts with HSPA8. Interacts with JPH2.

Functionally, co-chaperone for HSP/HSP70 proteins. It functions as a nucleotide-exchange factor promoting the release of ADP from HSP70, thereby activating HSP70-mediated protein refolding. Has an essential role in maintaining proteostasis at junctional membrane complexes (JMC), where it may function as a scaffold between the HSPA8 chaperone and JMC proteins enabling correct, HSPA8-dependent JMC protein folding. Inhibits both auto-ubiquitination of PRKN and ubiquitination of target proteins by PRKN. The sequence is that of BAG family molecular chaperone regulator 5 (Bag5) from Mus musculus (Mouse).